A 213-amino-acid chain; its full sequence is Uridine kinase (213 aa).

Gly13–Ser20 provides a ligand contact to ATP.

Belongs to the uridine kinase family.

It is found in the cytoplasm. It carries out the reaction uridine + ATP = UMP + ADP + H(+). It catalyses the reaction cytidine + ATP = CMP + ADP + H(+). Its pathway is pyrimidine metabolism; CTP biosynthesis via salvage pathway; CTP from cytidine: step 1/3. It functions in the pathway pyrimidine metabolism; UMP biosynthesis via salvage pathway; UMP from uridine: step 1/1. The protein is Uridine kinase of Histophilus somni (strain 129Pt) (Haemophilus somnus).